The sequence spans 297 residues: Acetyl-coenzyme A carboxylase carboxyl transferase subunit beta (297 aa).

Residues 27–296 enclose the CoA carboxyltransferase N-terminal domain; it reads LWHKCPSCEA…PEAAKEVAAV (270 aa). 4 residues coordinate Zn(2+): Cys-31, Cys-34, Cys-50, and Cys-53. The segment at 31 to 53 adopts a C4-type zinc-finger fold; it reads CPSCEAVLYRPELEKTLDVCPKC.

This sequence belongs to the AccD/PCCB family. As to quaternary structure, acetyl-CoA carboxylase is a heterohexamer composed of biotin carboxyl carrier protein (AccB), biotin carboxylase (AccC) and two subunits each of ACCase subunit alpha (AccA) and ACCase subunit beta (AccD). It depends on Zn(2+) as a cofactor.

The protein resides in the cytoplasm. It catalyses the reaction N(6)-carboxybiotinyl-L-lysyl-[protein] + acetyl-CoA = N(6)-biotinyl-L-lysyl-[protein] + malonyl-CoA. Its pathway is lipid metabolism; malonyl-CoA biosynthesis; malonyl-CoA from acetyl-CoA: step 1/1. Its function is as follows. Component of the acetyl coenzyme A carboxylase (ACC) complex. Biotin carboxylase (BC) catalyzes the carboxylation of biotin on its carrier protein (BCCP) and then the CO(2) group is transferred by the transcarboxylase to acetyl-CoA to form malonyl-CoA. In Pseudomonas entomophila (strain L48), this protein is Acetyl-coenzyme A carboxylase carboxyl transferase subunit beta.